Here is a 600-residue protein sequence, read N- to C-terminus: CoA ligase FVEG_12633 (600 aa).

Residues 170-174 (TSGTT), His214, 321-323 (AAL), and 342-343 (ER) contribute to the ATP site. Residues 241–342 (NSVWTRLAAP…QLTGGNVLLE (102 aa)) form an SBD1 region. Positions 343–420 (RYGMTEVGMA…LRGPTVFTGY (78 aa)) are SBD2. Substrate is bound at residue Met346. ATP-binding residues include Thr347, Asp441, Arg471, and Lys564. Residue Lys564 coordinates oxalate.

The protein belongs to the ATP-dependent AMP-binding enzyme family.

CoA ligase; part of the Fusarium detoxification of benzoxazolinone cluster 2 (FDB2) involved in the degradation of benzoxazolinones produced by the host plant. Maize, wheat, and rye produce the 2 benzoxazinone phytoanticipins 2,4-dihy-droxy-7-methoxy-1,4-benzoxazin-3-one (DIMBOA) and 2,4-dihydroxy-1,4-benzoxazin-3-one (DIBOA) that, due to their inherent instability once released, spontaneously degrade to the more stable corresponding benzoxazolinones, 6-methoxy-2-benzoxazolinone (MBOA) and 2-benzoxazolinone (BOA), respectively. The first step in the detoxification of benzoxazolinones involves the hydrolysis of the cyclic ester bond of benzoxazolinones by the FDB1 cluster gamma-lactamase MBL1 to aminophenols. MBL1 is able to convert BOA into 2-aminophenol (2-AP), as well as MBOA into 5-methoxy-2-aminophenol (2-AMP). The FDB2 cluster N-malonyltransferase FDB2/NAT1 then metabolizes aminophenols via N-malonylation to non-toxic malonamic acids. FDB2/NAT1 converts 2-AP into N-(2-hydroxyphenyl) malonamic acid (HPMA) and 2-AMP into N-(2-hydroxy-4-methoxyphenyl) malonamic acid (HMPMA). The duplicated dienlactone hydrolases DLH1 and DLH2 may provide redundant function for hydrolyzing the lactone moiety in the BOA molecule. The roles of the amidases an other enzymes encoded by the 2 FDB clusters have not been identified so far. The polypeptide is CoA ligase FVEG_12633 (Gibberella moniliformis (strain M3125 / FGSC 7600) (Maize ear and stalk rot fungus)).